The sequence spans 492 residues: Cytoplasmic dynein 1 light intermediate chain 2 (492 aa).

61-68 lines the ATP pocket; that stretch reads GEDGSGKT. Disordered regions lie at residues 187–206, 371–423, and 437–492; these read PEEG…SGSD, AKQP…KNNA, and LSKK…ENEA. A Phosphoserine modification is found at Ser194. Over residues 371-381 the composition is skewed to polar residues; the sequence is AKQPATPTRAS. A phosphoserine mark is found at Ser383 and Ser391. Arg397 carries the post-translational modification Omega-N-methylarginine. Positions 400–412 are enriched in low complexity; the sequence is PASVPSSSPGTSV. Residue Thr441 is modified to Phosphothreonine. Phosphoserine is present on residues Ser443 and Ser446. A compositionally biased stretch (polar residues) spans 452-469; the sequence is VQSTAKKSGQKTVLSNVQ. The segment covering 471 to 480 has biased composition (basic and acidic residues); the sequence is ELDRMTRKPD. Polar residues predominate over residues 482-492; sequence MVTNSSTENEA.

Belongs to the dynein light intermediate chain family. Homodimer. The cytoplasmic dynein 1 complex consists of two catalytic heavy chains (HCs) and a number of non-catalytic subunits presented by intermediate chains (ICs), light intermediate chains (LICs) and light chains (LCs); the composition seems to vary in respect to the IC, LIC and LC composition. The heavy chain homodimer serves as a scaffold for the probable homodimeric assembly of the respective non-catalytic subunits. The ICs and LICs bind directly to the HC dimer and the LCs assemble on the IC dimer. Interacts with DYNC1H1; DYNC1LI1 and DYNC1LI2 bind mutually exclusive to DYNC1H.

Its subcellular location is the cytoplasm. It is found in the cytoskeleton. Functionally, acts as one of several non-catalytic accessory components of the cytoplasmic dynein 1 complex that are thought to be involved in linking dynein to cargos and to adapter proteins that regulate dynein function. Cytoplasmic dynein 1 acts as a motor for the intracellular retrograde motility of vesicles and organelles along microtubules. May play a role in binding dynein to membranous organelles or chromosomes. The protein is Cytoplasmic dynein 1 light intermediate chain 2 of Homo sapiens (Human).